Here is a 35-residue protein sequence, read N- to C-terminus: UPF0387 membrane protein YohO (35 aa).

A helical membrane pass occupies residues 6 to 26; it reads IGVIALFLFMAFGGIGGVMLA.

It belongs to the UPF0387 family.

The protein localises to the cell inner membrane. This chain is UPF0387 membrane protein YohO, found in Escherichia coli O8 (strain IAI1).